Reading from the N-terminus, the 398-residue chain is uncharacterized protein (398 aa).

Transmembrane regions (helical) follow at residues Pro-43–Leu-65, Ile-89–Ser-108, Thr-156–Leu-173, Ile-180–Val-198, Leu-224–Ala-246, Ile-259–Gly-281, Ser-291–Ile-311, Leu-316–Val-338, Leu-351–Trp-373, and Thr-380–Phe-397.

The protein belongs to the major facilitator superfamily.

The protein resides in the cell membrane. This is an uncharacterized protein from Methanocaldococcus jannaschii (strain ATCC 43067 / DSM 2661 / JAL-1 / JCM 10045 / NBRC 100440) (Methanococcus jannaschii).